A 469-amino-acid polypeptide reads, in one-letter code: 3-isopropylmalate dehydratase large subunit (469 aa).

Positions 348, 409, and 412 each coordinate [4Fe-4S] cluster.

Belongs to the aconitase/IPM isomerase family. LeuC type 1 subfamily. In terms of assembly, heterodimer of LeuC and LeuD. [4Fe-4S] cluster serves as cofactor.

The enzyme catalyses (2R,3S)-3-isopropylmalate = (2S)-2-isopropylmalate. Its pathway is amino-acid biosynthesis; L-leucine biosynthesis; L-leucine from 3-methyl-2-oxobutanoate: step 2/4. Its function is as follows. Catalyzes the isomerization between 2-isopropylmalate and 3-isopropylmalate, via the formation of 2-isopropylmaleate. This chain is 3-isopropylmalate dehydratase large subunit, found in Nitrosococcus oceani (strain ATCC 19707 / BCRC 17464 / JCM 30415 / NCIMB 11848 / C-107).